Reading from the N-terminus, the 461-residue chain is Siroheme synthase (461 aa).

A precorrin-2 dehydrogenase /sirohydrochlorin ferrochelatase region spans residues 1–204 (MRYLPLFVYL…GNFRKANRVI (204 aa)). NAD(+)-binding positions include 22 to 23 (IV) and 43 to 44 (KT). At Ser128 the chain carries Phosphoserine. The segment at 218–461 (GSVSLVGAGP…HNEISWFGNG (244 aa)) is uroporphyrinogen-III C-methyltransferase. Pro227 contributes to the S-adenosyl-L-methionine binding site. The active-site Proton acceptor is Asp250. The active-site Proton donor is the Lys272. Residues 303–305 (GGD), Ile308, Met386, and Gly415 contribute to the S-adenosyl-L-methionine site.

It in the N-terminal section; belongs to the precorrin-2 dehydrogenase / sirohydrochlorin ferrochelatase family. In the C-terminal section; belongs to the precorrin methyltransferase family.

It catalyses the reaction uroporphyrinogen III + 2 S-adenosyl-L-methionine = precorrin-2 + 2 S-adenosyl-L-homocysteine + H(+). The enzyme catalyses precorrin-2 + NAD(+) = sirohydrochlorin + NADH + 2 H(+). It carries out the reaction siroheme + 2 H(+) = sirohydrochlorin + Fe(2+). Its pathway is cofactor biosynthesis; adenosylcobalamin biosynthesis; precorrin-2 from uroporphyrinogen III: step 1/1. It functions in the pathway cofactor biosynthesis; adenosylcobalamin biosynthesis; sirohydrochlorin from precorrin-2: step 1/1. It participates in porphyrin-containing compound metabolism; siroheme biosynthesis; precorrin-2 from uroporphyrinogen III: step 1/1. The protein operates within porphyrin-containing compound metabolism; siroheme biosynthesis; siroheme from sirohydrochlorin: step 1/1. Its pathway is porphyrin-containing compound metabolism; siroheme biosynthesis; sirohydrochlorin from precorrin-2: step 1/1. In terms of biological role, multifunctional enzyme that catalyzes the SAM-dependent methylations of uroporphyrinogen III at position C-2 and C-7 to form precorrin-2 via precorrin-1. Then it catalyzes the NAD-dependent ring dehydrogenation of precorrin-2 to yield sirohydrochlorin. Finally, it catalyzes the ferrochelation of sirohydrochlorin to yield siroheme. The polypeptide is Siroheme synthase (Blochmanniella floridana).